Consider the following 870-residue polypeptide: MSTRYNARAAEPKWQKIWEERGDFLMRDDADGKPKYYVLEMFPYPSGRIHMGHVRNYTMGDVIARYKKARGFNVLHPMGWDAFGMPAENAAMEKNVHPKGWTYDNIAAMREQLKAIGLAIDWSREFATCDPEYYGHEQALFLDMLEAGLVSRKKSMVNWDPVDNTVLANEQVIDGRGWRSGALVERRELTQWFLKISDFADELLEGLDTLDRWPEKVRLMQKNWIGRSEGARVFFELENAPDGNTKLEIFTTRPDTLYGASFCALSPHHPLTQSLAKDNPALTDFIRECDRIGTSEEAIETADKMGFDTGLKARHPFIEGKTLPVYVANFVLMDYGTGAIFACPAHDQRDLDFARKYNLPVIPVVAPKDKQGAELDAFASGLAETGTDAYTGDGVAINSDFLNGLDVQSAKRAAIDRLEAKGIGEGTVNYRLRDWGISRQRYWGCPIPVIHCASCGTLPVPRDQLPVVLPDDVNFSEPGNPLDRHPSWKHVDCPKCGKPASRETDTFDTFVDSSWYFVRFTAPDAPTPTDKALADHWLPVDQYIGGIEHAILHLLYSRFFTRAMKATGHVSLDEPFAGLFTQGMVNHETYRDAEGRWVPPAEVDIETVSGKRVAKRIADGEPVIIGSVEKMSKSKKNTVDPEDIIAKYGADTARWFMLSDSPPERDVQWTDQGAEGAWRFTQRLWRMVTERQEDLAPTGTPMPTAFSEDELTLRRAAHQALAAATEDFENLRFNRAVARVYELANAVSGFTPGTPEGAFAKREALEILVQIVGPMMPHIAEECWEALGHGEPLTAAEWPVADKALLVEDSVTIAVQVNGKRRDELTIARDADRETVERAALALEKVGKAIDGKPVRKVIVVPGKIVNIVV.

A 'HIGH' region motif is present at residues 43–53; that stretch reads PYPSGRIHMGH. The 'KMSKS' region motif lies at 630 to 634; that stretch reads KMSKS. Residue lysine 633 participates in ATP binding.

The protein belongs to the class-I aminoacyl-tRNA synthetase family.

It is found in the cytoplasm. The enzyme catalyses tRNA(Leu) + L-leucine + ATP = L-leucyl-tRNA(Leu) + AMP + diphosphate. In Parvibaculum lavamentivorans (strain DS-1 / DSM 13023 / NCIMB 13966), this protein is Leucine--tRNA ligase.